The primary structure comprises 494 residues: Aspartyl/glutamyl-tRNA(Asn/Gln) amidotransferase subunit B (494 aa).

This sequence belongs to the GatB/GatE family. GatB subfamily. Heterotrimer of A, B and C subunits.

The enzyme catalyses L-glutamyl-tRNA(Gln) + L-glutamine + ATP + H2O = L-glutaminyl-tRNA(Gln) + L-glutamate + ADP + phosphate + H(+). It carries out the reaction L-aspartyl-tRNA(Asn) + L-glutamine + ATP + H2O = L-asparaginyl-tRNA(Asn) + L-glutamate + ADP + phosphate + 2 H(+). In terms of biological role, allows the formation of correctly charged Asn-tRNA(Asn) or Gln-tRNA(Gln) through the transamidation of misacylated Asp-tRNA(Asn) or Glu-tRNA(Gln) in organisms which lack either or both of asparaginyl-tRNA or glutaminyl-tRNA synthetases. The reaction takes place in the presence of glutamine and ATP through an activated phospho-Asp-tRNA(Asn) or phospho-Glu-tRNA(Gln). The sequence is that of Aspartyl/glutamyl-tRNA(Asn/Gln) amidotransferase subunit B from Trichodesmium erythraeum (strain IMS101).